Here is a 418-residue protein sequence, read N- to C-terminus: Alpha-tubulin N-acetyltransferase 1 (418 aa).

Residues 1–186 form the N-acetyltransferase domain; that stretch reads MEFEFDVHKI…NNFVVFEGFF (186 aa). Residues 120 to 133 and 156 to 165 each bind acetyl-CoA; these read FYIH…GFGK and SEKFLSFLRK. Disordered regions lie at residues 237–292 and 322–353; these read SSLG…MNLS and QIKE…HQND. Residues 277–287 are compositionally biased toward basic and acidic residues; it reads QEDHSQRRRTS. The segment covering 329–353 has biased composition (polar residues); sequence RTDSSAQEGRTQDRPNGSNSQHQND.

This sequence belongs to the acetyltransferase ATAT1 family.

The protein resides in the cytoplasm. Its subcellular location is the membrane. It localises to the clathrin-coated pit. The protein localises to the cell junction. It is found in the focal adhesion. The protein resides in the cell projection. Its subcellular location is the axon. It localises to the cytoskeleton. The protein localises to the spindle. The catalysed reaction is L-lysyl-[alpha-tubulin] + acetyl-CoA = N(6)-acetyl-L-lysyl-[alpha-tubulin] + CoA + H(+). In terms of biological role, specifically acetylates 'Lys-40' in alpha-tubulin on the lumenal side of microtubules. Promotes microtubule destabilization and accelerates microtubule dynamics; this activity may be independent of acetylation activity. Acetylates alpha-tubulin with a slow enzymatic rate, due to a catalytic site that is not optimized for acetyl transfer. Enters the microtubule through each end and diffuses quickly throughout the lumen of microtubules. Acetylates only long/old microtubules because of its slow acetylation rate since it does not have time to act on dynamically unstable microtubules before the enzyme is released. May be involved in neuron development. The polypeptide is Alpha-tubulin N-acetyltransferase 1 (Xenopus laevis (African clawed frog)).